The following is a 291-amino-acid chain: MIPIQLTVFFMIIYVLESLTIIVQSSLIVAVLGREWLQVRRLMPVDMILISLGISRFCLQWASMLNBFCSYFNLNYVLCNLTITWEFFNILTFWLNSLLTVFYCIKVSSFTHHIFLWLRWRILRLFPWILLGSLMITCVTIIPSAIGNYIQIQLLTMEHLPRNSTVTDKLEKFHQYEFQAHTVALVIPFILFLASTILLMASLTKQIQHHSTGHCNPSMKAHFTALRSLAVLFIVFTSYFLTILITIIGTLFDRRCWLWVWEAFVYAFILMHSTSLMLSSPTLKRILKGKC.

Met-1 is a topological domain (extracellular). The helical transmembrane segment at 2-22 (IPIQLTVFFMIIYVLESLTII) threads the bilayer. Topologically, residues 23–41 (VQSSLIVAVLGREWLQVRR) are cytoplasmic. A helical transmembrane segment spans residues 42-62 (LMPVDMILISLGISRFCLQWA). The Extracellular portion of the chain corresponds to 63–84 (SMLNBFCSYFNLNYVLCNLTIT). Asn-80 is a glycosylation site (N-linked (GlcNAc...) asparagine). Residues 85–105 (WEFFNILTFWLNSLLTVFYCI) traverse the membrane as a helical segment. Over 106 to 125 (KVSSFTHHIFLWLRWRILRL) the chain is Cytoplasmic. Residues 126 to 146 (FPWILLGSLMITCVTIIPSAI) form a helical membrane-spanning segment. The Extracellular portion of the chain corresponds to 147–182 (GNYIQIQLLTMEHLPRNSTVTDKLEKFHQYEFQAHT). A glycan (N-linked (GlcNAc...) asparagine) is linked at Asn-163. The helical transmembrane segment at 183–203 (VALVIPFILFLASTILLMASL) threads the bilayer. Residues 204-228 (TKQIQHHSTGHCNPSMKAHFTALRS) are Cytoplasmic-facing. Residues 229-249 (LAVLFIVFTSYFLTILITIIG) form a helical membrane-spanning segment. Residues 250–257 (TLFDRRCW) lie on the Extracellular side of the membrane. A helical membrane pass occupies residues 258–278 (LWVWEAFVYAFILMHSTSLML). Topologically, residues 279 to 291 (SSPTLKRILKGKC) are cytoplasmic.

Belongs to the G-protein coupled receptor T2R family. In terms of assembly, interacts with RTP3 and RTP4.

Its subcellular location is the cell membrane. Receptor that may play a role in the perception of bitterness and is gustducin-linked. May play a role in sensing the chemical composition of the gastrointestinal content. The activity of this receptor may stimulate alpha gustducin, mediate PLC-beta-2 activation and lead to the gating of TRPM5. This chain is Taste receptor type 2 member 16 (TAS2R16), found in Gorilla gorilla gorilla (Western lowland gorilla).